Here is a 446-residue protein sequence, read N- to C-terminus: Histidine--tRNA ligase (446 aa).

This sequence belongs to the class-II aminoacyl-tRNA synthetase family. As to quaternary structure, homodimer.

The protein resides in the cytoplasm. The catalysed reaction is tRNA(His) + L-histidine + ATP = L-histidyl-tRNA(His) + AMP + diphosphate + H(+). The chain is Histidine--tRNA ligase from Burkholderia ambifaria (strain MC40-6).